The chain runs to 600 residues: Aspartate--tRNA(Asp/Asn) ligase (600 aa).

Glu-183 is a binding site for L-aspartate. An aspartate region spans residues 207 to 210 (QLFK). Arg-229 contributes to the L-aspartate binding site. Residues 229 to 231 (RDE) and Gln-238 contribute to the ATP site. His-456 contributes to the L-aspartate binding site. An ATP-binding site is contributed by Glu-490. Arg-497 contacts L-aspartate. An ATP-binding site is contributed by 542-545 (GLDR).

It belongs to the class-II aminoacyl-tRNA synthetase family. Type 1 subfamily. In terms of assembly, homodimer.

It is found in the cytoplasm. The catalysed reaction is tRNA(Asx) + L-aspartate + ATP = L-aspartyl-tRNA(Asx) + AMP + diphosphate. Functionally, aspartyl-tRNA synthetase with relaxed tRNA specificity since it is able to aspartylate not only its cognate tRNA(Asp) but also tRNA(Asn). Reaction proceeds in two steps: L-aspartate is first activated by ATP to form Asp-AMP and then transferred to the acceptor end of tRNA(Asp/Asn). This is Aspartate--tRNA(Asp/Asn) ligase from Moorella thermoacetica (strain ATCC 39073 / JCM 9320).